The sequence spans 526 residues: Peptide chain release factor 3 (526 aa).

The region spanning 8 to 277 (DKRRTFAIIS…GLTQWAPKPQ (270 aa)) is the tr-type G domain. GTP-binding positions include 17-24 (SHPDAGKT), 85-89 (DTPGH), and 139-142 (NKLD).

Belongs to the TRAFAC class translation factor GTPase superfamily. Classic translation factor GTPase family. PrfC subfamily.

Its subcellular location is the cytoplasm. In terms of biological role, increases the formation of ribosomal termination complexes and stimulates activities of RF-1 and RF-2. It binds guanine nucleotides and has strong preference for UGA stop codons. It may interact directly with the ribosome. The stimulation of RF-1 and RF-2 is significantly reduced by GTP and GDP, but not by GMP. This is Peptide chain release factor 3 from Actinobacillus succinogenes (strain ATCC 55618 / DSM 22257 / CCUG 43843 / 130Z).